The chain runs to 385 residues: Succinate--CoA ligase [ADP-forming] subunit beta (385 aa).

The ATP-grasp domain maps to K9–R244. ATP is bound by residues K46, G53–G55, E99, C102, and E107. 2 residues coordinate Mg(2+): N199 and D213. Residues N264 and G321–M323 each bind substrate.

It belongs to the succinate/malate CoA ligase beta subunit family. As to quaternary structure, heterotetramer of two alpha and two beta subunits. The cofactor is Mg(2+).

It carries out the reaction succinate + ATP + CoA = succinyl-CoA + ADP + phosphate. The enzyme catalyses GTP + succinate + CoA = succinyl-CoA + GDP + phosphate. It participates in carbohydrate metabolism; tricarboxylic acid cycle; succinate from succinyl-CoA (ligase route): step 1/1. Functionally, succinyl-CoA synthetase functions in the citric acid cycle (TCA), coupling the hydrolysis of succinyl-CoA to the synthesis of either ATP or GTP and thus represents the only step of substrate-level phosphorylation in the TCA. The beta subunit provides nucleotide specificity of the enzyme and binds the substrate succinate, while the binding sites for coenzyme A and phosphate are found in the alpha subunit. The polypeptide is Succinate--CoA ligase [ADP-forming] subunit beta (Rickettsia bellii (strain OSU 85-389)).